The primary structure comprises 384 residues: Carbamoyl phosphate synthase small chain (384 aa).

The tract at residues 1 to 195 (MLPVLPPALL…LGRGHGTLAD (195 aa)) is CPSase. L-glutamine-binding residues include Ser50, Gly247, and Gly249. The region spanning 199–384 (HVVAYDFGVK…RFVALMQERA (186 aa)) is the Glutamine amidotransferase type-1 domain. Cys275 (nucleophile) is an active-site residue. Positions 276, 279, 317, 319, and 320 each coordinate L-glutamine. Catalysis depends on residues His359 and Glu361.

It belongs to the CarA family. Composed of two chains; the small (or glutamine) chain promotes the hydrolysis of glutamine to ammonia, which is used by the large (or ammonia) chain to synthesize carbamoyl phosphate. Tetramer of heterodimers (alpha,beta)4.

The catalysed reaction is hydrogencarbonate + L-glutamine + 2 ATP + H2O = carbamoyl phosphate + L-glutamate + 2 ADP + phosphate + 2 H(+). The enzyme catalyses L-glutamine + H2O = L-glutamate + NH4(+). The protein operates within amino-acid biosynthesis; L-arginine biosynthesis; carbamoyl phosphate from bicarbonate: step 1/1. It participates in pyrimidine metabolism; UMP biosynthesis via de novo pathway; (S)-dihydroorotate from bicarbonate: step 1/3. In terms of biological role, small subunit of the glutamine-dependent carbamoyl phosphate synthetase (CPSase). CPSase catalyzes the formation of carbamoyl phosphate from the ammonia moiety of glutamine, carbonate, and phosphate donated by ATP, constituting the first step of 2 biosynthetic pathways, one leading to arginine and/or urea and the other to pyrimidine nucleotides. The small subunit (glutamine amidotransferase) binds and cleaves glutamine to supply the large subunit with the substrate ammonia. This Rubrivivax gelatinosus (strain NBRC 100245 / IL144) protein is Carbamoyl phosphate synthase small chain.